A 178-amino-acid polypeptide reads, in one-letter code: MAATEQSLAPAGSSAPPSGKEEGAGPSSGTEGDPAGSSSTPEAPSIPDSSNPSATVPEANVKPPAAGSAALDLPIGPAPQGPAPVAEASPRSPPGPGGSRPGPETFRQRFRQFRYQDAAGPREAFRQLRELSRQWLRPDIRTKEQIVEMLVQEQLLAILPEAARARRLRRRTDVRITG.

The interval 1 to 107 (MAATEQSLAP…GSRPGPETFR (107 aa)) is disordered. The span at 9–18 (APAGSSAPPS) shows a compositional bias: low complexity. Residues 36–54 (GSSSTPEAPSIPDSSNPSA) show a composition bias toward polar residues. An SCAN box domain is found at 107–178 (RQRFRQFRYQ…RRRTDVRITG (72 aa)).

As to quaternary structure, interacts with ZNF202.

It localises to the nucleus. In terms of biological role, may regulate transcriptional activity. This is SCAN domain-containing protein 1 (SCAND1) from Bos taurus (Bovine).